Here is a 293-residue protein sequence, read N- to C-terminus: MKNFKGTFTALVTPFKNGKIDFASLDKLLKQQLAGGVDGFVVNGTTGESPVLTSSEKAELFKHIRNVCGDKVVLIMGTGSNNTAQTIEDSRKAEEMGADAILVVVPYYNKPPQRGLYEHFKAVASSVKIPTILYNVPGRTITSLETGTIRDLAKVKGVVGIKEATGKIDLASEIIKACGSEFVMLSGDDGTYVEFLGVGGHGVISVASHVIPAQMVQWKKWVSEGALDKARADIAKYNDLINLLFVEANPIPVKKALQLMGILESAELRLPLVELGAENTAKLQAEMKKVGVL.

A pyruvate-binding site is contributed by T46. Y134 functions as the Proton donor/acceptor in the catalytic mechanism. Residue K162 is the Schiff-base intermediate with substrate of the active site. I204 contacts pyruvate.

It belongs to the DapA family. As to quaternary structure, homotetramer; dimer of dimers.

It localises to the cytoplasm. The catalysed reaction is L-aspartate 4-semialdehyde + pyruvate = (2S,4S)-4-hydroxy-2,3,4,5-tetrahydrodipicolinate + H2O + H(+). It participates in amino-acid biosynthesis; L-lysine biosynthesis via DAP pathway; (S)-tetrahydrodipicolinate from L-aspartate: step 3/4. Its function is as follows. Catalyzes the condensation of (S)-aspartate-beta-semialdehyde [(S)-ASA] and pyruvate to 4-hydroxy-tetrahydrodipicolinate (HTPA). The chain is 4-hydroxy-tetrahydrodipicolinate synthase from Bdellovibrio bacteriovorus (strain ATCC 15356 / DSM 50701 / NCIMB 9529 / HD100).